Consider the following 200-residue polypeptide: Small ribosomal subunit protein eS1 (200 aa).

This sequence belongs to the eukaryotic ribosomal protein eS1 family.

The polypeptide is Small ribosomal subunit protein eS1 (Thermococcus onnurineus (strain NA1)).